Here is a 219-residue protein sequence, read N- to C-terminus: Small ribosomal subunit protein uS3 (219 aa).

The KH type-2 domain occupies 38–106 (IRTYLKKKLY…KLNLEIKEIK (69 aa)).

The protein belongs to the universal ribosomal protein uS3 family. Part of the 30S ribosomal subunit. Forms a tight complex with proteins S10 and S14.

Functionally, binds the lower part of the 30S subunit head. Binds mRNA in the 70S ribosome, positioning it for translation. This chain is Small ribosomal subunit protein uS3, found in Lachnoclostridium phytofermentans (strain ATCC 700394 / DSM 18823 / ISDg) (Clostridium phytofermentans).